The following is an 805-amino-acid chain: Transforming acidic coiled-coil-containing protein 1 (805 aa).

The residue at position 2 (A2) is an N-acetylalanine. A2 carries the N-myristoyl glycine lipid modification. Residues 2 to 55 form an interaction with LSM7 and SNRPG region; sequence AFSPWQILSPVQWAKWTWSAVRGGAAGEDEAGGPEGDPEEEDSQAETKSLSFSS. A phosphoserine mark is found at S4, S10, and S44. Residues 23 to 140 form a disordered region; the sequence is RGGAAGEDEA…SVKNFREEPE (118 aa). Positions 28 to 45 are enriched in acidic residues; that stretch reads GEDEAGGPEGDPEEEDSQ. 2 stretches are compositionally biased toward polar residues: residues 47 to 60 and 111 to 128; these read ETKSLSFSSDSEGN and SKTCSKPSENEVPQQAID. A compositionally biased stretch (basic and acidic residues) spans 130–140; that stretch reads HSVKNFREEPE. S147 and S153 each carry phosphoserine. The interaction with TDRD7 stretch occupies residues 152 to 259; the sequence is FSIETKDSTD…TNAAVEGTPL (108 aa). Residues 206-427 form an interaction with YEATS4 region; it reads EASAEADLKA…DPDNFDESMD (222 aa). SPAZ domains follow at residues 215–297 and 359–507; these read AGNS…TPGT and SKSA…TDEE. A disordered region spans residues 215 to 457; sequence AGNSCPELVP…VNEILESPKK (243 aa). The Bipartite nuclear localization signal 1 motif lies at 226–241; the sequence is RRSKLRKPKPVPLRKK. Basic residues predominate over residues 226-242; it reads RRSKLRKPKPVPLRKKA. S228 carries the phosphoserine; by AURKC modification. A phosphoserine mark is found at S248 and S276. Composition is skewed to polar residues over residues 296–305, 377–413, and 431–447; these read GTLSSDTNDS, LSQTSSKPDPSQWESPSFNPFGSHSVLQNSPPLSSEG, and PTTTLTSSDFCSPTGNH. Phosphoserine occurs at positions 381 and 406. Positions 455-471 match the Bipartite nuclear localization signal 2 motif; that stretch reads PKKAKSRLITSGCKVKK. S483 is subject to Phosphoserine. The tract at residues 493-526 is disordered; the sequence is ISDISNRDGHATDEEKLASTSCGQKSAGAEVKGE. The span at 497–509 shows a compositional bias: basic and acidic residues; the sequence is SNRDGHATDEEKL. The residue at position 533 (Y533) is a Phosphotyrosine. Position 591 is a phosphoserine (S591). Residues 610 to 805 adopt a coiled-coil conformation; it reads IREEIITKEI…ELIAKLGKTD (196 aa). An interaction with CH-TOG region spans residues 701 to 805; that stretch reads VLEGFKKNEE…ELIAKLGKTD (105 aa).

This sequence belongs to the TACC family. In terms of assembly, interacts with KIAA0097/CH-TOG and with the oncogenic transcription factor YEATS4. Interacts with AURKA, AURKB and AURKC. Interacts with LSM7, TDRD7 and SNRPG. Interacts with GCN5L2 and PCAF. Interacts with the thyroid hormone receptors THRB and THRA, predominantly with isoform alpha-2. The interaction with THRA isoform alpha-1 and THRB is decreased in the presence of thyroid hormone T3. Also interacts with other nuclear receptors, including ESR1, NR3C1, PPARG, RARA and RXRA, preferentially in the absence of their hormonal ligands. In terms of processing, isoform 1 is heavily phosphorylated; isoform 6 is not. As to expression, isoform 1, isoform 3 and isoform 5 are ubiquitous. Isoform 2 is strongly expressed in the brain, weakly detectable in lung and colon, and overexpressed in gastric cancer. Isoform 4 is not detected in normal tissues, but strong expression was found in gastric cancer tissues. Down-regulated in a subset of cases of breast cancer.

The protein localises to the cytoplasm. It localises to the nucleus. Its subcellular location is the cytoskeleton. It is found in the microtubule organizing center. The protein resides in the centrosome. The protein localises to the midbody. It localises to the membrane. In terms of biological role, involved in transcription regulation induced by nuclear receptors, including in T3 thyroid hormone and all-trans retinoic acid pathways. Might promote the nuclear localization of the receptors. Likely involved in the processes that promote cell division prior to the formation of differentiated tissues. This Homo sapiens (Human) protein is Transforming acidic coiled-coil-containing protein 1 (TACC1).